The sequence spans 31 residues: Unknown protein from spot 104 of 2D-PAGE of thylakoid (31 aa).

Its subcellular location is the plastid. It is found in the chloroplast thylakoid. The protein is Unknown protein from spot 104 of 2D-PAGE of thylakoid of Pisum sativum (Garden pea).